The chain runs to 357 residues: Neuronal-specific septin-3 (357 aa).

The span at 1-10 shows a compositional bias: basic and acidic residues; the sequence is MSKGLPETRT. The segment at 1 to 29 is disordered; sequence MSKGLPETRTDAAMSELVPEPRPKPAVPM. The region spanning 58–330 is the Septin-type G domain; that stretch reads TGFDFNIMVV…ETYRAKRLND (273 aa). Residues 68-75 are G1 motif; it reads GQSGLGKS. Residue 68–75 participates in GTP binding; the sequence is GQSGLGKS. Residue serine 91 is modified to Phosphoserine. Residue threonine 102 participates in GTP binding. Residues 125–128 are G3 motif; it reads DTPG. The G4 motif stretch occupies residues 207–210; it reads AKAD. Residues 208–216, glycine 264, and arginine 279 each bind GTP; that span reads KADTMTLEE.

The protein belongs to the TRAFAC class TrmE-Era-EngA-EngB-Septin-like GTPase superfamily. Septin GTPase family. Septins polymerize into heterooligomeric protein complexes that form filaments, and can associate with cellular membranes, actin filaments and microtubules. GTPase activity is required for filament formation. Post-translationally, phosphorylated by PKG on serine residues. Phosphorylated by PKG on Ser-91.

It localises to the cytoplasm. It is found in the cytoskeleton. The protein localises to the synapse. Filament-forming cytoskeletal GTPase. May play a role in cytokinesis (Potential). In Bos taurus (Bovine), this protein is Neuronal-specific septin-3.